Consider the following 103-residue polypeptide: Nucleoid-associated protein SUN_2278 (103 aa).

This sequence belongs to the YbaB/EbfC family. Homodimer.

The protein localises to the cytoplasm. It is found in the nucleoid. Its function is as follows. Binds to DNA and alters its conformation. May be involved in regulation of gene expression, nucleoid organization and DNA protection. The sequence is that of Nucleoid-associated protein SUN_2278 from Sulfurovum sp. (strain NBC37-1).